Reading from the N-terminus, the 1183-residue chain is DNA-directed RNA polymerase subunit beta (1183 aa).

Residues A1155–D1183 are disordered.

The protein belongs to the RNA polymerase beta chain family. The RNAP catalytic core consists of 2 alpha, 1 beta, 1 beta' and 1 omega subunit. When a sigma factor is associated with the core the holoenzyme is formed, which can initiate transcription.

The catalysed reaction is RNA(n) + a ribonucleoside 5'-triphosphate = RNA(n+1) + diphosphate. Its function is as follows. DNA-dependent RNA polymerase catalyzes the transcription of DNA into RNA using the four ribonucleoside triphosphates as substrates. The sequence is that of DNA-directed RNA polymerase subunit beta from Staphylococcus carnosus (strain TM300).